Reading from the N-terminus, the 628-residue chain is Putative ankyrin repeat protein L769 (628 aa).

ANK repeat units lie at residues 217–246 (NYMD…EYDF), 333–362 (DLDE…DINR), 421–451 (TAEN…NHDL), and 512–542 (NNLK…DQDY).

The sequence is that of Putative ankyrin repeat protein L769 from Acanthamoeba polyphaga mimivirus (APMV).